The sequence spans 287 residues: Large ribosomal subunit protein uL3 (287 aa).

Residues 228–287 (KAPEAKPAKLSKKKQAKELAKAQAANQQTVEAKVDTPVVEPKPTEVKKAAPVVEKKGEDK) are disordered. Residues 269-287 (KPTEVKKAAPVVEKKGEDK) are compositionally biased toward basic and acidic residues.

Belongs to the universal ribosomal protein uL3 family. As to quaternary structure, part of the 50S ribosomal subunit. Forms a cluster with proteins L14 and L19.

In terms of biological role, one of the primary rRNA binding proteins, it binds directly near the 3'-end of the 23S rRNA, where it nucleates assembly of the 50S subunit. The sequence is that of Large ribosomal subunit protein uL3 from Mycoplasma pneumoniae (strain ATCC 29342 / M129 / Subtype 1) (Mycoplasmoides pneumoniae).